The primary structure comprises 248 residues: MAGHSKWANIKHRKERQDAKKGKIFTKWIRELTVAARQGGGDPGSNPRLRLALDKALGANMTRDTIDRAVARGVGASDGDDVEELGYEGYGPGGVAVMVETMTDNRNRTAAAVRHAFTKCGGNLGTDGSVAYLFDRKGQISFAAGVDEDSLIEAAMEADADDVVTNDDGSIDVFTSFSGFYAVRNALEAAGFMAADAEIVMLPTTSAVLDLETAEKVLKLIDMLEDLDDVQNVYSNAEIPDEVMEQLG.

Belongs to the TACO1 family.

It is found in the cytoplasm. The protein is Probable transcriptional regulatory protein PSPTO_3980 of Pseudomonas syringae pv. tomato (strain ATCC BAA-871 / DC3000).